We begin with the raw amino-acid sequence, 279 residues long: GTP cyclohydrolase MptA (279 aa).

This sequence belongs to the GTP cyclohydrolase IV family. Homodimer. Fe(2+) serves as cofactor.

The enzyme catalyses GTP + H2O = 7,8-dihydroneopterin 2',3'-cyclic phosphate + formate + diphosphate + H(+). Its pathway is cofactor biosynthesis; 5,6,7,8-tetrahydromethanopterin biosynthesis. Functionally, converts GTP to 7,8-dihydro-D-neopterin 2',3'-cyclic phosphate, the first intermediate in the biosynthesis of coenzyme methanopterin. The chain is GTP cyclohydrolase MptA from Korarchaeum cryptofilum (strain OPF8).